Reading from the N-terminus, the 239-residue chain is LRRN4 C-terminal-like protein (239 aa).

The first 19 residues, 1–19 (MLGSLSLLWLAAMTTSLVS), serve as a signal peptide directing secretion. The Extracellular portion of the chain corresponds to 20–194 (QPQILTLEDY…KFIMPPKPVT (175 aa)). One can recognise a Fibronectin type-III domain in the interval 82–179 (QPEPPRLGEV…EGPENWTGPS (98 aa)). Residues Asn-132 and Asn-174 are each glycosylated (N-linked (GlcNAc...) asparagine). A helical membrane pass occupies residues 195 to 215 (LVYAAVGVGTALALLSCAALV). Over 216-239 (WHFCLRERWGCPRRQGMAQASEAL) the chain is Cytoplasmic.

The protein resides in the membrane. This chain is LRRN4 C-terminal-like protein (Lrrn4cl), found in Mus musculus (Mouse).